The sequence spans 216 residues: DNA repair and recombination protein RadB (216 aa).

Belongs to the eukaryotic RecA-like protein family. RadB subfamily.

Involved in DNA repair and in homologous recombination. May regulate the cleavage reactions of the branch-structured DNA. Has a very weak ATPase activity that is not stimulated by DNA. Binds DNA but does not promote DNA strands exchange. This chain is DNA repair and recombination protein RadB, found in Methanococcus maripaludis (strain C5 / ATCC BAA-1333).